Reading from the N-terminus, the 317-residue chain is Dimethyladenosine transferase (317 aa).

S-adenosyl-L-methionine-binding residues include H37, L39, G64, E85, D113, and N128.

The protein belongs to the class I-like SAM-binding methyltransferase superfamily. rRNA adenine N(6)-methyltransferase family.

It carries out the reaction adenosine(1779)/adenosine(1780) in 18S rRNA + 4 S-adenosyl-L-methionine = N(6)-dimethyladenosine(1779)/N(6)-dimethyladenosine(1780) in 18S rRNA + 4 S-adenosyl-L-homocysteine + 4 H(+). Specifically dimethylates two adjacent adenosines in the loop of a conserved hairpin near the 3'-end of 18S rRNA in the 40S particle. The protein is Dimethyladenosine transferase (DIM1) of Candida glabrata (strain ATCC 2001 / BCRC 20586 / JCM 3761 / NBRC 0622 / NRRL Y-65 / CBS 138) (Yeast).